A 287-amino-acid polypeptide reads, in one-letter code: MTLLLNTTAKLYIAPRTLPFTSSSTFARSPFLRIPSLLKPLSPLTARVSLSSTMGDSADAGMDAVQRRLMFDDECILVDENDRVVGHDTKYNCHLMEKIEKDNLLHRAFSVFLFNSKYELLLQQRSATKVTFPLVWTNTCCSHPLYRESELIDEESLGARNAAQRKLLDELGIPAEDVPVDQFTPLGRMLYKAPSDGKWGEHELDYLLFIVRDVSVNPNPDEVADIKYVNRDELKELLRKADAGEGGLKLSPWFRLVVDNFLFKWWDHVEKGTLKEVADMKTIHKLT.

The transit peptide at 1 to 51 directs the protein to the chloroplast; that stretch reads MTLLLNTTAKLYIAPRTLPFTSSSTFARSPFLRIPSLLKPLSPLTARVSLS. Position 90 (lysine 90) interacts with substrate. Mg(2+) is bound by residues histidine 94 and histidine 106. Residues 104 to 256 form the Nudix hydrolase domain; the sequence is LLHRAFSVFL…GLKLSPWFRL (153 aa). Positions 125 and 129 each coordinate substrate. Cysteine 141 is a catalytic residue. A substrate-binding site is contributed by serine 142. Positions 142–172 match the Nudix box motif; sequence SHPLYRESELIDEESLGARNAAQRKLLDELG. Mg(2+) contacts are provided by glutamate 201 and glutamate 203. The active site involves glutamate 203.

Belongs to the IPP isomerase type 1 family. As to quaternary structure, monomer. It depends on Mg(2+) as a cofactor. In terms of tissue distribution, mainly expressed in roots and trichomes and, to a lower extent, in leaves, flowers and stems.

It localises to the plastid. Its subcellular location is the chloroplast. The catalysed reaction is isopentenyl diphosphate = dimethylallyl diphosphate. The protein operates within isoprenoid biosynthesis; dimethylallyl diphosphate biosynthesis; dimethylallyl diphosphate from isopentenyl diphosphate: step 1/1. Its pathway is porphyrin-containing compound metabolism; chlorophyll biosynthesis. Functionally, catalyzes the 1,3-allylic rearrangement of the homoallylic substrate isopentenyl (IPP) to its highly electrophilic allylic isomer, dimethylallyl diphosphate (DMAPP). This is Isopentenyl-diphosphate Delta-isomerase 1, chloroplastic from Cannabis sativa (Hemp).